Consider the following 810-residue polypeptide: ATP-dependent RNA helicase dbp4 (810 aa).

The disordered stretch occupies residues 1–28; that stretch reads MAPAAGPRTGKHAKPPRSKTLKRKRGQD. Residues 9–25 show a composition bias toward basic residues; sequence TGKHAKPPRSKTLKRKR. Positions 47–75 match the Q motif motif; the sequence is KSFSDLPLSEPTASGLASSHYKTLTDIQS. The Helicase ATP-binding domain maps to 78 to 252; it reads ISHALKGRDV…RLSLQDPEYV (175 aa). 91-98 provides a ligand contact to ATP; the sequence is AKTGSGKT. A DEAD box motif is present at residues 200–203; it reads DEAD. One can recognise a Helicase C-terminal domain in the interval 278–437; that stretch reads KLDILWSFIR…SIKDQLQNMC (160 aa). Disordered stretches follow at residues 494–542, 590–615, and 690–810; these read GDDT…DRMF, AGDK…DVKV, and ERTR…GLLG. The segment covering 522–542 has biased composition (basic and acidic residues); it reads GEKKSKKKEEPQVRTKYDRMF. A compositionally biased stretch (basic and acidic residues) spans 690-704; that stretch reads ERTRMADMEDKEIAK. Residues 705-714 are compositionally biased toward basic residues; that stretch reads QKRREKKEKR. Positions 764 to 786 are enriched in basic and acidic residues; the sequence is KFTEANDREEAEPWYKKSKKPSD.

Belongs to the DEAD box helicase family. DDX10/DBP4 subfamily. Interacts with the U3 and U14 snoRNAs. Associates with pre-ribosomal complexes.

The protein localises to the nucleus. The protein resides in the nucleolus. The catalysed reaction is ATP + H2O = ADP + phosphate + H(+). Its function is as follows. ATP-dependent RNA helicase required for ribosome biogenesis. Involved in the release of U14 snoRNA in pre-ribosomal complexes. Required for pre-rRNA cleavage at site A2. This chain is ATP-dependent RNA helicase dbp4 (dbp4), found in Neosartorya fischeri (strain ATCC 1020 / DSM 3700 / CBS 544.65 / FGSC A1164 / JCM 1740 / NRRL 181 / WB 181) (Aspergillus fischerianus).